The sequence spans 483 residues: Zinc metalloproteinase/disintegrin VMP-II (483 aa).

Positions 1-20 (MIQVLLVTLCLAAFPYQGNS) are cleaved as a signal peptide. A propeptide spanning residues 21–191 (IILESGNVND…KASQLNLTPE (171 aa)) is cleaved from the precursor. In terms of domain architecture, Peptidase M12B spans 198–394 (RYIELVVVAD…HNPQCMLNEP (197 aa)). Ca(2+)-binding residues include glutamate 201 and aspartate 285. Intrachain disulfides connect cysteine 309–cysteine 389, cysteine 349–cysteine 373, and cysteine 351–cysteine 356. Histidine 334 is a Zn(2+) binding site. The active site involves glutamate 335. The Zn(2+) site is built by histidine 338 and histidine 344. Ca(2+)-binding residues include cysteine 389 and asparagine 392. Positions 395–414 (LRTDIVSTPVSGNELWETGE) are excised as a propeptide. The region spanning 402-483 (TPVSGNELWE…AGCPRNPFHA (82 aa)) is the Disintegrin domain. Intrachain disulfides connect cysteine 425–cysteine 448, cysteine 439–cysteine 445, cysteine 444–cysteine 469, and cysteine 457–cysteine 476. A Cell attachment site; atypical (KGD) motif is present at residues 461–463 (KGD).

Belongs to the venom metalloproteinase (M12B) family. P-II subfamily. P-IIe sub-subfamily. In terms of assembly, heterodimer; disulfide-linked (disintegrin). It depends on Zn(2+) as a cofactor. Expressed by the venom gland.

Its subcellular location is the secreted. With respect to regulation, inhibited by EDTA and 1,10-phenanthroline, but not by PMSF. In terms of biological role, has fibrinolytic activity. The recombinant enzyme cleaves both alpha- (FGA) and beta-chains (FGB) of fibrinogen, but not the gamma-chain. The recombinant protein does not produce hemorrhage in mice and does not have effect on ADP- or collagen-stimulated platelet aggregation. Its function is as follows. Inhibits platelet aggregation induced by ADP, thrombin, platelet-activating factor and collagen. Acts by inhibiting fibrinogen interaction with platelet receptors GPIIb/GPIIIa (ITGA2B/ITGB3). This chain is Zinc metalloproteinase/disintegrin VMP-II, found in Agkistrodon piscivorus leucostoma (Western cottonmouth).